Reading from the N-terminus, the 206-residue chain is Thiamine-phosphate synthase (206 aa).

4-amino-2-methyl-5-(diphosphooxymethyl)pyrimidine is bound by residues glutamine 35–lysine 39 and asparagine 67. Residues aspartate 68 and aspartate 87 each contribute to the Mg(2+) site. 4-amino-2-methyl-5-(diphosphooxymethyl)pyrimidine is bound at residue serine 106. Threonine 132–threonine 134 contacts 2-[(2R,5Z)-2-carboxy-4-methylthiazol-5(2H)-ylidene]ethyl phosphate. Residue lysine 135 participates in 4-amino-2-methyl-5-(diphosphooxymethyl)pyrimidine binding. Residues glycine 163 and isoleucine 183 to serine 184 contribute to the 2-[(2R,5Z)-2-carboxy-4-methylthiazol-5(2H)-ylidene]ethyl phosphate site.

It belongs to the thiamine-phosphate synthase family. The cofactor is Mg(2+).

The catalysed reaction is 2-[(2R,5Z)-2-carboxy-4-methylthiazol-5(2H)-ylidene]ethyl phosphate + 4-amino-2-methyl-5-(diphosphooxymethyl)pyrimidine + 2 H(+) = thiamine phosphate + CO2 + diphosphate. The enzyme catalyses 2-(2-carboxy-4-methylthiazol-5-yl)ethyl phosphate + 4-amino-2-methyl-5-(diphosphooxymethyl)pyrimidine + 2 H(+) = thiamine phosphate + CO2 + diphosphate. It catalyses the reaction 4-methyl-5-(2-phosphooxyethyl)-thiazole + 4-amino-2-methyl-5-(diphosphooxymethyl)pyrimidine + H(+) = thiamine phosphate + diphosphate. It participates in cofactor biosynthesis; thiamine diphosphate biosynthesis; thiamine phosphate from 4-amino-2-methyl-5-diphosphomethylpyrimidine and 4-methyl-5-(2-phosphoethyl)-thiazole: step 1/1. Functionally, condenses 4-methyl-5-(beta-hydroxyethyl)thiazole monophosphate (THZ-P) and 2-methyl-4-amino-5-hydroxymethyl pyrimidine pyrophosphate (HMP-PP) to form thiamine monophosphate (TMP). The protein is Thiamine-phosphate synthase of Methanospirillum hungatei JF-1 (strain ATCC 27890 / DSM 864 / NBRC 100397 / JF-1).